Here is a 319-residue protein sequence, read N- to C-terminus: BTB/POZ domain-containing adapter for CUL3-mediated RhoA degradation protein 2 (319 aa).

In terms of domain architecture, BTB spans 31–99; that stretch reads KYIRLNVGGC…LRDDTIALPK (69 aa).

This sequence belongs to the BACURD family. As to quaternary structure, component of the BCR(TNFAIP1) E3 ubiquitin ligase complex, at least composed of cul3, tnfaip1/bacurd2 and rbx1.

It localises to the cytoplasm. The protein localises to the nucleus. It is found in the endosome. The protein operates within protein modification; protein ubiquitination. Functionally, substrate-specific adapter of a BCR (BTB-CUL3-RBX1) E3 ubiquitin-protein ligase complex involved in regulation of cytoskeleton structure. The BCR(TNFAIP1) E3 ubiquitin ligase complex mediates the ubiquitination of target proteins, leading to their degradation by the proteasome. This Xenopus laevis (African clawed frog) protein is BTB/POZ domain-containing adapter for CUL3-mediated RhoA degradation protein 2 (tnfaip1).